The primary structure comprises 400 residues: Bifunctional enzyme IspD/IspF (400 aa).

The tract at residues 1–244 is 2-C-methyl-D-erythritol 4-phosphate cytidylyltransferase; sequence MSHRVLGTER…LLKERDKMDI (244 aa). The interval 245–400 is 2-C-methyl-D-erythritol 2,4-cyclodiphosphate synthase; it reads RTGNGYDVHR…ALATVTLVRT (156 aa). Positions 251 and 253 each coordinate a divalent metal cation. 4-CDP-2-C-methyl-D-erythritol 2-phosphate-binding positions include 251–253 and 277–278; these read DVH and HS. H285 is an a divalent metal cation binding site. Residues 299 to 301, 375 to 378, F382, and R385 each bind 4-CDP-2-C-methyl-D-erythritol 2-phosphate; these read DIG and TTSE.

This sequence in the N-terminal section; belongs to the IspD/TarI cytidylyltransferase family. IspD subfamily. The protein in the C-terminal section; belongs to the IspF family. It depends on a divalent metal cation as a cofactor.

The catalysed reaction is 2-C-methyl-D-erythritol 4-phosphate + CTP + H(+) = 4-CDP-2-C-methyl-D-erythritol + diphosphate. The enzyme catalyses 4-CDP-2-C-methyl-D-erythritol 2-phosphate = 2-C-methyl-D-erythritol 2,4-cyclic diphosphate + CMP. It participates in isoprenoid biosynthesis; isopentenyl diphosphate biosynthesis via DXP pathway; isopentenyl diphosphate from 1-deoxy-D-xylulose 5-phosphate: step 2/6. It functions in the pathway isoprenoid biosynthesis; isopentenyl diphosphate biosynthesis via DXP pathway; isopentenyl diphosphate from 1-deoxy-D-xylulose 5-phosphate: step 4/6. Its function is as follows. Bifunctional enzyme that catalyzes the formation of 4-diphosphocytidyl-2-C-methyl-D-erythritol from CTP and 2-C-methyl-D-erythritol 4-phosphate (MEP) (IspD), and catalyzes the conversion of 4-diphosphocytidyl-2-C-methyl-D-erythritol 2-phosphate (CDP-ME2P) to 2-C-methyl-D-erythritol 2,4-cyclodiphosphate (ME-CPP) with a corresponding release of cytidine 5-monophosphate (CMP) (IspF). This Dinoroseobacter shibae (strain DSM 16493 / NCIMB 14021 / DFL 12) protein is Bifunctional enzyme IspD/IspF.